We begin with the raw amino-acid sequence, 376 residues long: Putative F-box protein At1g30930 (376 aa).

Residues 1–44 (MKNSIPIDLIIEIVSRSTAKSVARCHCVSKQWRAIFRRKYFIEL) form the F-box domain.

In Arabidopsis thaliana (Mouse-ear cress), this protein is Putative F-box protein At1g30930.